Reading from the N-terminus, the 173-residue chain is Alpha-crystallin A chain (173 aa).

M1 carries the post-translational modification N-acetylmethionine. The interval 1-63 is required for complex formation with BFSP1 and BFSP2; that stretch reads MDIAIQHPWF…RTVLDSGISE (63 aa). Deamidated glutamine; partial is present on Q6. Phosphoserine is present on S45. Residue Q50 is modified to Deamidated glutamine; partial. Positions 52–162 constitute a sHSP domain; sequence LFRTVLDSGI…GHSERAIPVS (111 aa). At K70 the chain carries N6-acetyllysine. Q90 is subject to Deamidated glutamine; partial. K99 carries the N6-acetyllysine modification. Residue H100 coordinates Zn(2+). Deamidated asparagine; partial is present on N101. Zn(2+) contacts are provided by E102 and H107. A Phosphoserine modification is found at S122. Deamidated asparagine; partial is present on N123. The segment at 144-173 is disordered; the sequence is PKVPSGVDAGHSERAIPVSREEKPSSAPSS. Residues 153-167 show a composition bias toward basic and acidic residues; that stretch reads GHSERAIPVSREEKP. Position 154 (H154) interacts with Zn(2+). S162 carries O-linked (GlcNAc) serine glycosylation.

Belongs to the small heat shock protein (HSP20) family. As to quaternary structure, heteromer composed of three CRYAA and one CRYAB subunits. Inter-subunit bridging via zinc ions enhances stability, which is crucial as there is no protein turn over in the lens. Can also form homodimers and homotetramers (dimers of dimers) which serve as the building blocks of homooligomers. Within homooligomers, the zinc-binding motif is created from residues of 3 different molecules. His-100 and Glu-102 from one molecule are ligands of the zinc ion, and His-107 and His-154 residues from additional molecules complete the site with tetrahedral coordination geometry. Part of a complex required for lens intermediate filament formation composed of BFSP1, BFSP2 and CRYAA. Post-translationally, acetylation at Lys-70 may increase chaperone activity. In terms of processing, undergoes age-dependent proteolytical cleavage at the C-terminus.

The protein resides in the cytoplasm. The protein localises to the nucleus. In terms of biological role, contributes to the transparency and refractive index of the lens. Acts as a chaperone, preventing aggregation of various proteins under a wide range of stress conditions. Required for the correct formation of lens intermediate filaments as part of a complex composed of BFSP1, BFSP2 and CRYAA. The sequence is that of Alpha-crystallin A chain (CRYAA) from Ovis aries (Sheep).